A 458-amino-acid chain; its full sequence is UDP-N-acetylmuramoylalanine--D-glutamate ligase (458 aa).

124-130 (GSDGKTT) contacts ATP.

The protein belongs to the MurCDEF family.

It localises to the cytoplasm. It catalyses the reaction UDP-N-acetyl-alpha-D-muramoyl-L-alanine + D-glutamate + ATP = UDP-N-acetyl-alpha-D-muramoyl-L-alanyl-D-glutamate + ADP + phosphate + H(+). Its pathway is cell wall biogenesis; peptidoglycan biosynthesis. Cell wall formation. Catalyzes the addition of glutamate to the nucleotide precursor UDP-N-acetylmuramoyl-L-alanine (UMA). The protein is UDP-N-acetylmuramoylalanine--D-glutamate ligase of Clostridium kluyveri (strain NBRC 12016).